A 1159-amino-acid chain; its full sequence is WASH complex subunit 5 (1159 aa).

Belongs to the strumpellin family. In terms of assembly, component of the WASH complex.

Its subcellular location is the early endosome. Acts at least in part as component of the WASH complex which seems to regulate washc1 nucleation-promoting factor (NPF) activity and is required for its membrane targeting during endosomal sorting. The sequence is that of WASH complex subunit 5 from Danio rerio (Zebrafish).